The chain runs to 609 residues: Grainyhead-like protein 1 homolog (609 aa).

The tract at residues 1–91 (MTQDYDNKRP…EHDHADHEHS (91 aa)) is transcription activation. The interval 183 to 207 (SDHFTSNNQPPNSQRRTPDSTFSET) is disordered. Positions 185 to 206 (HFTSNNQPPNSQRRTPDSTFSE) are enriched in polar residues. One can recognise a Grh/CP2 DB domain in the interval 239–465 (AGNNFEYTLE…DLDTQPVLFI (227 aa)). Interaction with DNA stretches follow at residues 371–380 (TDFSSQKGVK) and 418–421 (RKIR).

The protein belongs to the grh/CP2 family. Grainyhead subfamily. Binds DNA as homodimer.

It is found in the nucleus. Its function is as follows. Transcription factor involved in epithelial development. Binds directly to the consensus DNA sequence 5'-AACCGGTT-3' and modulates expression of epidermal-specific genes, including XK81A1. Important regulator of DSG1 in the context of epidermal differentiation. Regulates the maintenance of skin barrier. No genetic interaction with GRHL3, nor functional cooperativity due to diverse target gene selectivity during epithelia development. Functions downstream of BMP-signaling cascade modulating endogenous bmp4-responsive targets. This is Grainyhead-like protein 1 homolog from Xenopus laevis (African clawed frog).